An 89-amino-acid chain; its full sequence is DNA/RNA-binding protein Alba (89 aa).

At Lys-11 the chain carries N6-acetyllysine.

This sequence belongs to the histone-like Alba family. Post-translationally, acetylated. Acetylation at Lys-11 decreases DNA-binding affinity.

It is found in the cytoplasm. The protein resides in the chromosome. Functionally, binds double-stranded DNA tightly but without sequence specificity. Involved in DNA compaction. The sequence is that of DNA/RNA-binding protein Alba from Thermoplasma volcanium (strain ATCC 51530 / DSM 4299 / JCM 9571 / NBRC 15438 / GSS1).